The sequence spans 151 residues: uncharacterized protein (151 aa).

This is an uncharacterized protein from Methanocaldococcus jannaschii (strain ATCC 43067 / DSM 2661 / JAL-1 / JCM 10045 / NBRC 100440) (Methanococcus jannaschii).